An 83-amino-acid polypeptide reads, in one-letter code: Short neurotoxin C (83 aa).

Residues 1-21 (MKTLLLTLVVVTMVCLDLAYT) form the signal peptide. 4 disulfide bridges follow: cysteine 24–cysteine 45, cysteine 38–cysteine 62, cysteine 64–cysteine 75, and cysteine 76–cysteine 81.

The protein belongs to the three-finger toxin family. Short-chain subfamily. Type I alpha-neurotoxin sub-subfamily. As to expression, expressed by the venom gland.

Its subcellular location is the secreted. Its function is as follows. Binds to muscle nicotinic acetylcholine receptor (nAChR) and inhibit acetylcholine from binding to the receptor, thereby impairing neuromuscular transmission. This chain is Short neurotoxin C, found in Laticauda colubrina (Yellow-lipped sea krait).